Reading from the N-terminus, the 333-residue chain is Cell division protein ZipA (333 aa).

Over 1 to 5 the chain is Periplasmic; the sequence is MQELR. A helical membrane pass occupies residues 6-26; that stretch reads LVLILVGALAIAALLFHGLWT. Over 27–333 the chain is Cytoplasmic; that stretch reads SRKETSSKFG…KQRVKVFCRK (307 aa). A compositionally biased stretch (basic and acidic residues) spans 72–81; the sequence is KEPAFAREEV. A disordered region spans residues 72 to 119; the sequence is KEPAFAREEVPTSDDPLFEGTVSSESNKFTQQEKPTVQQAQPQPQPQP. Residues 92–107 show a composition bias toward polar residues; the sequence is TVSSESNKFTQQEKPT. Low complexity predominate over residues 108 to 119; the sequence is VQQAQPQPQPQP.

Belongs to the ZipA family. In terms of assembly, interacts with FtsZ via their C-terminal domains.

Its subcellular location is the cell inner membrane. In terms of biological role, essential cell division protein that stabilizes the FtsZ protofilaments by cross-linking them and that serves as a cytoplasmic membrane anchor for the Z ring. Also required for the recruitment to the septal ring of downstream cell division proteins. This Aliivibrio fischeri (strain ATCC 700601 / ES114) (Vibrio fischeri) protein is Cell division protein ZipA.